The following is a 540-amino-acid chain: Chaperonin GroEL (540 aa).

ATP is bound by residues 29–32 (TLGP), 86–90 (DGTTT), glycine 413, 476–478 (NAA), and aspartate 492.

The protein belongs to the chaperonin (HSP60) family. In terms of assembly, forms a cylinder of 14 subunits composed of two heptameric rings stacked back-to-back. Interacts with the co-chaperonin GroES.

Its subcellular location is the cytoplasm. It carries out the reaction ATP + H2O + a folded polypeptide = ADP + phosphate + an unfolded polypeptide.. Functionally, together with its co-chaperonin GroES, plays an essential role in assisting protein folding. The GroEL-GroES system forms a nano-cage that allows encapsulation of the non-native substrate proteins and provides a physical environment optimized to promote and accelerate protein folding. This chain is Chaperonin GroEL, found in Streptococcus sanguinis.